A 128-amino-acid chain; its full sequence is Large ribosomal subunit protein bL17 (128 aa).

This sequence belongs to the bacterial ribosomal protein bL17 family. Part of the 50S ribosomal subunit. Contacts protein L32.

This Baumannia cicadellinicola subsp. Homalodisca coagulata protein is Large ribosomal subunit protein bL17.